The following is a 248-amino-acid chain: PF03932 family protein CutC (248 aa).

It belongs to the CutC family.

It localises to the cytoplasm. The sequence is that of PF03932 family protein CutC from Citrobacter koseri (strain ATCC BAA-895 / CDC 4225-83 / SGSC4696).